A 181-amino-acid chain; its full sequence is uncharacterized protein (181 aa).

This is an uncharacterized protein from Homo sapiens (Human).